The chain runs to 61 residues: Large ribosomal subunit protein bL32 (61 aa).

The segment covering 1-19 (MAHPKRRQSKTRTAKRRTH) has biased composition (basic residues). A disordered region spans residues 1 to 20 (MAHPKRRQSKTRTAKRRTHD).

Belongs to the bacterial ribosomal protein bL32 family.

This chain is Large ribosomal subunit protein bL32, found in Bacteroides fragilis (strain YCH46).